The sequence spans 393 residues: S-adenosylmethionine synthase 1 (393 aa).

Glu-9 contributes to the Mg(2+) binding site. ATP is bound at residue His-15. Residue Glu-43 participates in K(+) binding. Glu-56 and Gln-99 together coordinate L-methionine. Residues Asp-167–Lys-169, Ser-235–Phe-238, Asp-246, Arg-252–Lys-253, Ala-269, Lys-273, and Lys-277 each bind ATP. Asp-246 is an L-methionine binding site. Lys-277 is a binding site for L-methionine.

This sequence belongs to the AdoMet synthase family. As to quaternary structure, homotetramer. Requires Mn(2+) as cofactor. It depends on Mg(2+) as a cofactor. Co(2+) is required as a cofactor. K(+) serves as cofactor. Mostly expressed in stems.

It localises to the cytoplasm. It catalyses the reaction L-methionine + ATP + H2O = S-adenosyl-L-methionine + phosphate + diphosphate. It functions in the pathway amino-acid biosynthesis; S-adenosyl-L-methionine biosynthesis; S-adenosyl-L-methionine from L-methionine: step 1/1. Its function is as follows. Catalyzes the formation of S-adenosylmethionine from methionine and ATP. The reaction comprises two steps that are both catalyzed by the same enzyme: formation of S-adenosylmethionine (AdoMet) and triphosphate, and subsequent hydrolysis of the triphosphate. The polypeptide is S-adenosylmethionine synthase 1 (SAM1) (Solanum lycopersicum (Tomato)).